The chain runs to 270 residues: Indole-3-glycerol phosphate synthase (270 aa).

It belongs to the TrpC family.

It catalyses the reaction 1-(2-carboxyphenylamino)-1-deoxy-D-ribulose 5-phosphate + H(+) = (1S,2R)-1-C-(indol-3-yl)glycerol 3-phosphate + CO2 + H2O. It functions in the pathway amino-acid biosynthesis; L-tryptophan biosynthesis; L-tryptophan from chorismate: step 4/5. This is Indole-3-glycerol phosphate synthase from Salinibacter ruber (strain DSM 13855 / M31).